The chain runs to 277 residues: tRNA uridine(34) hydroxylase (277 aa).

The Rhodanese domain occupies 126–221 (SSPDVHVIDT…YLETMRGDDS (96 aa)). The active-site Cysteine persulfide intermediate is the C181.

It belongs to the TrhO family.

It catalyses the reaction uridine(34) in tRNA + AH2 + O2 = 5-hydroxyuridine(34) in tRNA + A + H2O. In terms of biological role, catalyzes oxygen-dependent 5-hydroxyuridine (ho5U) modification at position 34 in tRNAs. The sequence is that of tRNA uridine(34) hydroxylase from Anaplasma marginale (strain St. Maries).